A 745-amino-acid chain; its full sequence is DEAD-box ATP-dependent RNA helicase 3A, chloroplastic (745 aa).

The transit peptide at Met1–Val41 directs the protein to the chloroplast. The Q motif signature appears at Leu88 to Arg116. The Helicase ATP-binding domain occupies Leu119–Ile295. Ala132–Thr139 contributes to the ATP binding site. Positions Asp243–Asp246 match the DEAD box motif. The Helicase C-terminal domain occupies Ile324–Leu469. The interval Leu606–Ser724 is disordered. Residues Gly641–Gly650 show a composition bias toward gly residues. Residues Glu656 to Asn670 show a composition bias toward basic and acidic residues. Over residues Arg687–Ser724 the composition is skewed to low complexity. The CCHC-type zinc finger occupies Gly727–Asn744.

Belongs to the DEAD box helicase family. DDX21/DDX50 subfamily.

The protein resides in the plastid. The protein localises to the chloroplast. It catalyses the reaction ATP + H2O = ADP + phosphate + H(+). Its function is as follows. Nuclear genome-encoded factor involved in ribosome biogenesis in chloroplasts. Binds specific group II introns in chloroplasts and facilitates their splicing. Required for normal development of chloroplasts. The sequence is that of DEAD-box ATP-dependent RNA helicase 3A, chloroplastic from Zea mays (Maize).